The sequence spans 312 residues: MSKEDIEGTNILDEPVHGIYIPAALFVVGVAITTYMSGELKILWSLPILFMIIFVRAYSAYKRRRSLYPDRWTSLELEDQTIISKNTALYRFKLKTRLESLDIPAGHHVAVRVPIDGKQEVRYYNPISSKLESGYLDLVVKAYVDGKVSKYFAGLNSGDTVDFKGPIGTLNYEPNSSKHLGIVAGGSGITPVLQILNEIITVPEDLTKVSLLYANETENDILLKDELDEMAEKYPHFQVHYVVHYPSDRWTGDVGYITKDQMNRYLPEYSEDNRLLICGPDGMNNLALQYAKELGWKVNSTRSSGDDQVFVF.

The Extracellular portion of the chain corresponds to 1-15 (MSKEDIEGTNILDEP). The helical transmembrane segment at 16-36 (VHGIYIPAALFVVGVAITTYM) threads the bilayer. Over 37-39 (SGE) the chain is Cytoplasmic. The chain crosses the membrane as a helical span at residues 40–60 (LKILWSLPILFMIIFVRAYSA). Topologically, residues 61-179 (YKRRRSLYPD…LNYEPNSSKH (119 aa)) are extracellular. Positions 70-173 (DRWTSLELED…KGPIGTLNYE (104 aa)) constitute an FAD-binding FR-type domain. FAD contacts are provided by residues 153-168 (AGLN…GPIG) and 179-211 (HLGI…KVSL). The helical transmembrane segment at 180-200 (LGIVAGGSGITPVLQILNEII) threads the bilayer. Residues 201–312 (TVPEDLTKVS…SSGDDQVFVF (112 aa)) are Cytoplasmic-facing.

It belongs to the flavoprotein pyridine nucleotide cytochrome reductase family. Requires FAD as cofactor.

Its subcellular location is the cell membrane. The protein resides in the endoplasmic reticulum membrane. The enzyme catalyses 2 Fe(III)-[cytochrome b5] + NADH = 2 Fe(II)-[cytochrome b5] + NAD(+) + H(+). Inhibited by diphenylene iodonium (DPI). Its function is as follows. NADH-dependent cytochrome b5 reductase that reduces coenzyme Q6 at the plasma membrane and mediates lifespan extension by calorie restriction by shifting fermentative to respiratory metabolism, probably through modulating the NAD(+)/NADH ratio. This chain is Plasma membrane-associated coenzyme Q6 reductase PGA3 (PGA3), found in Saccharomyces cerevisiae (strain ATCC 204508 / S288c) (Baker's yeast).